A 185-amino-acid polypeptide reads, in one-letter code: MATTNDLKNGMVLNLDGELWAVVEFQHVKPGKGGAFVRTTLKNVLSGKVVDKTFNAGTKVETATVDKRTMQYLYADGEDFVFMDLETFDQINVLGDTVGEAANYLLPEAEATVATHEGVPLYVELPTSVVLEITYTEPGLQGDRSTGGSKPATVETGATVQVPLFITTGEKIKVDTRDGRYLGRA.

The protein belongs to the elongation factor P family.

It is found in the cytoplasm. Its pathway is protein biosynthesis; polypeptide chain elongation. Its function is as follows. Involved in peptide bond synthesis. Stimulates efficient translation and peptide-bond synthesis on native or reconstituted 70S ribosomes in vitro. Probably functions indirectly by altering the affinity of the ribosome for aminoacyl-tRNA, thus increasing their reactivity as acceptors for peptidyl transferase. The chain is Elongation factor P from Salinispora tropica (strain ATCC BAA-916 / DSM 44818 / JCM 13857 / NBRC 105044 / CNB-440).